A 351-amino-acid chain; its full sequence is 3-dehydroquinate synthase (351 aa).

NAD(+) is bound by residues Asp60–Lys65, Gly94–Asp98, Thr118–Thr119, Lys131, Lys140, and Phe158–Thr161. 3 residues coordinate Zn(2+): Glu173, His239, and His256.

This sequence belongs to the sugar phosphate cyclases superfamily. Dehydroquinate synthase family. The cofactor is Co(2+). Requires Zn(2+) as cofactor. NAD(+) is required as a cofactor.

The protein resides in the cytoplasm. It catalyses the reaction 7-phospho-2-dehydro-3-deoxy-D-arabino-heptonate = 3-dehydroquinate + phosphate. Its pathway is metabolic intermediate biosynthesis; chorismate biosynthesis; chorismate from D-erythrose 4-phosphate and phosphoenolpyruvate: step 2/7. Functionally, catalyzes the conversion of 3-deoxy-D-arabino-heptulosonate 7-phosphate (DAHP) to dehydroquinate (DHQ). In Campylobacter jejuni subsp. jejuni serotype O:23/36 (strain 81-176), this protein is 3-dehydroquinate synthase.